Reading from the N-terminus, the 206-residue chain is MKQMVCWLTAGLLTLGGLPARAGDTVPAVPETPAAPAAPAVQETPASSAAPGFWQRSWDNVETTWRSDRYELYLPAITWHNRAFYDRDKIDEYNEHPWGLGLGRYRYDSDGNWHALYAMFFLDSHDKVEPFAGYAWQKIWRPADDVRLGAGFTVGVTARSDYSYIPFPAILPLVSVEYRRLALQATYIPGGHNNGNVLFGWLRWQL.

Positions 1–22 are cleaved as a signal peptide; that stretch reads MKQMVCWLTAGLLTLGGLPARA. The span at 26-46 shows a compositional bias: low complexity; it reads VPAVPETPAAPAAPAVQETPA. Residues 26-50 form a disordered region; it reads VPAVPETPAAPAAPAVQETPASSAA. Residues His-80, Asp-123, and Ser-124 contribute to the active site.

Belongs to the lipid A palmitoyltransferase family. As to quaternary structure, homodimer.

It is found in the cell outer membrane. It catalyses the reaction a lipid A + a 1,2-diacyl-sn-glycero-3-phosphocholine = a hepta-acyl lipid A + a 2-acyl-sn-glycero-3-phosphocholine. The enzyme catalyses a lipid IVA + a 1,2-diacyl-sn-glycero-3-phosphocholine = a lipid IVB + a 2-acyl-sn-glycero-3-phosphocholine. The catalysed reaction is a lipid IIA + a 1,2-diacyl-sn-glycero-3-phosphocholine = a lipid IIB + a 2-acyl-sn-glycero-3-phosphocholine. Functionally, transfers a fatty acid residue from the sn-1 position of a phospholipid to the N-linked hydroxyfatty acid chain on the proximal unit of lipid A or its precursors. This chain is Lipid A acyltransferase PagP, found in Laribacter hongkongensis (strain HLHK9).